Here is a 549-residue protein sequence, read N- to C-terminus: ATP synthase subunit alpha (549 aa).

172 to 179 (GDRKTGKT) serves as a coordination point for ATP. The disordered stretch occupies residues 513-549 (SSTGESVVPDEHVEAMDEEDLGKESVKVKKPAPQKKK). Positions 540 to 549 (VKKPAPQKKK) are enriched in basic residues.

It belongs to the ATPase alpha/beta chains family. In terms of assembly, F-type ATPases have 2 components, CF(1) - the catalytic core - and CF(0) - the membrane proton channel. CF(1) has five subunits: alpha(3), beta(3), gamma(1), delta(1), epsilon(1). CF(0) has three main subunits: a(1), b(2) and c(9-12). The alpha and beta chains form an alternating ring which encloses part of the gamma chain. CF(1) is attached to CF(0) by a central stalk formed by the gamma and epsilon chains, while a peripheral stalk is formed by the delta and b chains.

Its subcellular location is the cell membrane. It carries out the reaction ATP + H2O + 4 H(+)(in) = ADP + phosphate + 5 H(+)(out). Produces ATP from ADP in the presence of a proton gradient across the membrane. The alpha chain is a regulatory subunit. The chain is ATP synthase subunit alpha from Mycobacterium ulcerans (strain Agy99).